The sequence spans 349 residues: 5-deoxyribose 1-phosphate isomerase (349 aa).

Residues 49–51, Arg92, and Gln199 each bind substrate; that span reads RGA. The active-site Proton donor is the Asp240. Residue 250-251 coordinates substrate; that stretch reads NK.

This sequence belongs to the EIF-2B alpha/beta/delta subunits family. DrdI subfamily.

It carries out the reaction 5-deoxy-alpha-D-ribose 1-phosphate = 5-deoxy-D-ribulose 1-phosphate. It functions in the pathway carbohydrate degradation. Its function is as follows. Catalyzes the isomerization of 5-deoxy-alpha-D-ribose 1-phosphate to 5-deoxy-D-ribulose 1-phosphate, as part of a 5-deoxyribose salvage pathway that recycles this toxic radical SAM enzyme by-product to mainstream metabolites. In Clostridium botulinum (strain Langeland / NCTC 10281 / Type F), this protein is 5-deoxyribose 1-phosphate isomerase.